Reading from the N-terminus, the 399-residue chain is Argininosuccinate synthase (399 aa).

8 to 16 (AYSGGLDTS) lines the ATP pocket. Tyr87 is an L-citrulline binding site. Gly117 contributes to the ATP binding site. L-aspartate contacts are provided by Thr119, Asn123, and Asp124. Asn123 lines the L-citrulline pocket. L-citrulline contacts are provided by Arg127, Ser175, Glu260, and Tyr272.

It belongs to the argininosuccinate synthase family. Type 1 subfamily. In terms of assembly, homotetramer.

The protein resides in the cytoplasm. The catalysed reaction is L-citrulline + L-aspartate + ATP = 2-(N(omega)-L-arginino)succinate + AMP + diphosphate + H(+). The protein operates within amino-acid biosynthesis; L-arginine biosynthesis; L-arginine from L-ornithine and carbamoyl phosphate: step 2/3. This Rhodococcus erythropolis (strain PR4 / NBRC 100887) protein is Argininosuccinate synthase.